The chain runs to 141 residues: Hemoglobin subunit alpha (141 aa).

Residues 1–141 (VLSPADKSNV…VSTVLTSKYR (141 aa)) form the Globin domain. A Phosphoserine modification is found at serine 3. An N6-succinyllysine mark is found at lysine 7 and lysine 11. Lysine 16 carries the post-translational modification N6-acetyllysine; alternate. Lysine 16 is subject to N6-succinyllysine; alternate. Residue tyrosine 24 is modified to Phosphotyrosine. Serine 35 carries the phosphoserine modification. Residue lysine 40 is modified to N6-succinyllysine. Serine 49 is subject to Phosphoserine. Histidine 58 is a binding site for O2. Histidine 87 lines the heme b pocket. Serine 102 is modified (phosphoserine). Phosphothreonine is present on threonine 108. 2 positions are modified to phosphoserine: serine 124 and serine 131. Phosphothreonine is present on residues threonine 134 and threonine 137. At serine 138 the chain carries Phosphoserine.

This sequence belongs to the globin family. As to quaternary structure, heterotetramer of two alpha chains and two beta chains. Red blood cells.

Its function is as follows. Involved in oxygen transport from the lung to the various peripheral tissues. In terms of biological role, hemopressin acts as an antagonist peptide of the cannabinoid receptor CNR1. Hemopressin-binding efficiently blocks cannabinoid receptor CNR1 and subsequent signaling. The chain is Hemoglobin subunit alpha (HBA) from Saguinus oedipus (Cotton-top tamarin).